The following is a 433-amino-acid chain: Mitochondrial inner membrane magnesium transporter MIT1 (433 aa).

Positions 257 to 298 (TNKLLRDMMKIKNNLQKLSNLLNALRTNIEKILNNENDMKNM) form a coiled coil. Residues 360-380 (FILLNAKISFSTLLFSISSVV) traverse the membrane as a helical segment. Topologically, residues 381–396 (TSLFGMNLKNFVEDSN) are extracellular. Residues 397 to 417 (YAFIIVSIFVSVWSIIGIYVT) traverse the membrane as a helical segment. Residues 418 to 433 (KNINTLLKFFDRYNFR) are Mitochondrial matrix-facing.

It belongs to the CorA metal ion transporter (MIT) (TC 1.A.35) family.

It localises to the mitochondrion inner membrane. Its function is as follows. Mitochondrial inner membrane magnesium transporter required for mitochondrial magnesium homeostasis. Involved in the development of the sporozoite in the mosquito vector midgut. The chain is Mitochondrial inner membrane magnesium transporter MIT1 from Plasmodium berghei (strain Anka).